The primary structure comprises 437 residues: CCA-adding enzyme (437 aa).

Ser-47 and Arg-50 together coordinate ATP. Residues Ser-47 and Arg-50 each coordinate CTP. Mg(2+) is bound by residues Glu-59, Asp-61, and Asp-110. ATP contacts are provided by His-133, Lys-152, and Tyr-161. CTP is bound by residues His-133, Lys-152, and Tyr-161.

It belongs to the tRNA nucleotidyltransferase/poly(A) polymerase family. Archaeal CCA-adding enzyme subfamily. Homodimer. Mg(2+) serves as cofactor.

It catalyses the reaction a tRNA precursor + 2 CTP + ATP = a tRNA with a 3' CCA end + 3 diphosphate. The enzyme catalyses a tRNA with a 3' CCA end + 2 CTP + ATP = a tRNA with a 3' CCACCA end + 3 diphosphate. Functionally, catalyzes the addition and repair of the essential 3'-terminal CCA sequence in tRNAs without using a nucleic acid template. Adds these three nucleotides in the order of C, C, and A to the tRNA nucleotide-73, using CTP and ATP as substrates and producing inorganic pyrophosphate. tRNA 3'-terminal CCA addition is required both for tRNA processing and repair. Also involved in tRNA surveillance by mediating tandem CCA addition to generate a CCACCA at the 3' terminus of unstable tRNAs. While stable tRNAs receive only 3'-terminal CCA, unstable tRNAs are marked with CCACCA and rapidly degraded. The structural flexibility of RNA controls the choice between CCA versus CCACCA addition: following the first CCA addition cycle, nucleotide-binding to the active site triggers a clockwise screw motion, producing torque on the RNA. This ejects stable RNAs, whereas unstable RNAs are refolded while bound to the enzyme and subjected to a second CCA catalytic cycle. The sequence is that of CCA-adding enzyme from Archaeoglobus fulgidus (strain ATCC 49558 / DSM 4304 / JCM 9628 / NBRC 100126 / VC-16).